A 138-amino-acid chain; its full sequence is Transcription antitermination protein NusB (138 aa).

The protein belongs to the NusB family.

Involved in transcription antitermination. Required for transcription of ribosomal RNA (rRNA) genes. Binds specifically to the boxA antiterminator sequence of the ribosomal RNA (rrn) operons. This is Transcription antitermination protein NusB from Helicobacter pylori (strain G27).